The sequence spans 2162 residues: Polyketide synthase 1 (2162 aa).

The N-terminal acylcarrier protein transacylase domain (SAT) stretch occupies residues 19–264 (FVFGDQTSCN…TPLAVHAPYH (246 aa)). The region spanning 397-841 (DSKIAIIGMS…GGNTALLVED (445 aa)) is the Ketosynthase family 3 (KS3) domain. Active-site for beta-ketoacyl synthase activity residues include C578, H713, and H757. The segment at 941–1245 (AFVFSGQGSQ…PSLMRSHDGW (305 aa)) is malonyl-CoA:ACP transacylase (MAT) domain. S1030 serves as the catalytic For acyl/malonyl transferase activity. The segment at 1322 to 1636 (TASVHRIVRE…RRVLDAAMPA (315 aa)) is product template (PT) domain. The N-terminal hotdog fold stretch occupies residues 1326–1459 (HRIVRESVDR…SSLCFGESRA (134 aa)). The 306-residue stretch at 1326–1631 (HRIVRESVDR…FQGVPRRVLD (306 aa)) folds into the PKS/mFAS DH domain. H1358 functions as the Proton acceptor; for dehydratase activity in the catalytic mechanism. The C-terminal hotdog fold stretch occupies residues 1486 to 1631 (LNSRLSSGVI…FQGVPRRVLD (146 aa)). D1545 functions as the Proton donor; for dehydratase activity in the catalytic mechanism. The disordered stretch occupies residues 1633-1669 (AMPAPKSPNKTRDHASPNATISRAKPPQGSSPASSAQ). The segment covering 1658-1669 (PPQGSSPASSAQ) has biased composition (low complexity). The 75-residue stretch at 1692–1766 (IDPMHAVLRI…DFAVHLGLDT (75 aa)) folds into the Carrier 1 domain. An O-(pantetheine 4'-phosphoryl)serine modification is found at S1726. Residues 1772 to 1783 (SSGESNVSGGVS) are compositionally biased toward low complexity. Positions 1772-1809 (SSGESNVSGGVSPRSDSVAAMSSDVTTPPAQSPLGSMS) are disordered. Positions 1794–1809 (SDVTTPPAQSPLGSMS) are enriched in polar residues. A Carrier 2 domain is found at 1807 to 1884 (SMSSSPCEDL…SFKHVFEQEI (78 aa)). S1844 is subject to O-(pantetheine 4'-phosphoryl)serine. A thioesterase (TE) domain region spans residues 1896–2160 (LKKYHATSTL…ERVAAFIRSA (265 aa)). The For thioesterase activity role is filled by S1987.

In terms of biological role, polyketide synthase; part of the Pks1 gene cluster that mediates the biosynthesis of an anthraquinone derivative pigment that contributes to conidial pigmentation that provides protection from UV radiation, heat and cold stress. The polyketide synthase Pks1 produces 1-acetyl-2,4,6,8-tetrahydroxy-9,10-anthraquinone though condensation of acetyl-CoA with malonyl-CoA. The dehydratase EthD and the laccase Mlac1 further convert the anthraquinone derivative into the final conidial pigment. The sequence is that of Polyketide synthase 1 from Metarhizium album (strain ARSEF 1941).